Consider the following 398-residue polypeptide: Histidinol-phosphate aminotransferase (398 aa).

The span at 1 to 10 (MTGQRATPQP) shows a compositional bias: polar residues. The disordered stretch occupies residues 1–30 (MTGQRATPQPTLDDLPLRDDLRGKSPYGAP). Residue Lys-234 is modified to N6-(pyridoxal phosphate)lysine.

This sequence belongs to the class-II pyridoxal-phosphate-dependent aminotransferase family. Histidinol-phosphate aminotransferase subfamily. In terms of assembly, homodimer. Pyridoxal 5'-phosphate serves as cofactor.

It catalyses the reaction L-histidinol phosphate + 2-oxoglutarate = 3-(imidazol-4-yl)-2-oxopropyl phosphate + L-glutamate. It participates in amino-acid biosynthesis; L-histidine biosynthesis; L-histidine from 5-phospho-alpha-D-ribose 1-diphosphate: step 7/9. This Mycobacterium avium (strain 104) protein is Histidinol-phosphate aminotransferase.